Consider the following 234-residue polypeptide: Ribose-5-phosphate isomerase A (234 aa).

Residues 28–31 (TGST), 83–86 (DGAD), and 96–99 (KGGG) each bind substrate. Glu105 serves as the catalytic Proton acceptor. Lys123 serves as a coordination point for substrate.

It belongs to the ribose 5-phosphate isomerase family. Homodimer.

The enzyme catalyses aldehydo-D-ribose 5-phosphate = D-ribulose 5-phosphate. It functions in the pathway carbohydrate degradation; pentose phosphate pathway; D-ribose 5-phosphate from D-ribulose 5-phosphate (non-oxidative stage): step 1/1. Its function is as follows. Catalyzes the reversible conversion of ribose-5-phosphate to ribulose 5-phosphate. The chain is Ribose-5-phosphate isomerase A from Bartonella quintana (strain Toulouse) (Rochalimaea quintana).